Consider the following 228-residue polypeptide: Demethylmenaquinone methyltransferase (228 aa).

Residues Thr62, Asp80, 100-101 (DA), and Ser117 each bind S-adenosyl-L-methionine.

It belongs to the class I-like SAM-binding methyltransferase superfamily. MenG/UbiE family.

The catalysed reaction is a 2-demethylmenaquinol + S-adenosyl-L-methionine = a menaquinol + S-adenosyl-L-homocysteine + H(+). Its pathway is quinol/quinone metabolism; menaquinone biosynthesis; menaquinol from 1,4-dihydroxy-2-naphthoate: step 2/2. In terms of biological role, methyltransferase required for the conversion of demethylmenaquinol (DMKH2) to menaquinol (MKH2). The protein is Demethylmenaquinone methyltransferase of Mycolicibacterium vanbaalenii (strain DSM 7251 / JCM 13017 / BCRC 16820 / KCTC 9966 / NRRL B-24157 / PYR-1) (Mycobacterium vanbaalenii).